A 163-amino-acid chain; its full sequence is Neurotrophin-3 (163 aa).

An N-terminal signal peptide occupies residues 1–3; that stretch reads IQS. The propeptide occupies 4 to 119; that stretch reads TSMDQGILTE…VLNRTSRRKR (116 aa). The N-linked (GlcNAc...) asparagine glycan is linked to Asn-112. The interval 112–132 is disordered; it reads NRTSRRKREGKSHRGEYSVCD. Over residues 123–132 the composition is skewed to basic and acidic residues; the sequence is SHRGEYSVCD.

The protein belongs to the NGF-beta family.

The protein localises to the secreted. Functionally, seems to promote the survival of visceral and proprioceptive sensory neurons. The chain is Neurotrophin-3 (NTF3) from Exiliboa placata (Oaxacan dwarf boa).